A 177-amino-acid polypeptide reads, in one-letter code: ATP synthase subunit delta (177 aa).

The protein belongs to the ATPase delta chain family. As to quaternary structure, F-type ATPases have 2 components, F(1) - the catalytic core - and F(0) - the membrane proton channel. F(1) has five subunits: alpha(3), beta(3), gamma(1), delta(1), epsilon(1). F(0) has three main subunits: a(1), b(2) and c(10-14). The alpha and beta chains form an alternating ring which encloses part of the gamma chain. F(1) is attached to F(0) by a central stalk formed by the gamma and epsilon chains, while a peripheral stalk is formed by the delta and b chains.

The protein localises to the cell inner membrane. In terms of biological role, f(1)F(0) ATP synthase produces ATP from ADP in the presence of a proton or sodium gradient. F-type ATPases consist of two structural domains, F(1) containing the extramembraneous catalytic core and F(0) containing the membrane proton channel, linked together by a central stalk and a peripheral stalk. During catalysis, ATP synthesis in the catalytic domain of F(1) is coupled via a rotary mechanism of the central stalk subunits to proton translocation. Functionally, this protein is part of the stalk that links CF(0) to CF(1). It either transmits conformational changes from CF(0) to CF(1) or is implicated in proton conduction. The protein is ATP synthase subunit delta of Sodalis glossinidius (strain morsitans).